The primary structure comprises 119 residues: Ribosome-binding factor A (119 aa).

This sequence belongs to the RbfA family. Monomer. Binds 30S ribosomal subunits, but not 50S ribosomal subunits or 70S ribosomes.

Its subcellular location is the cytoplasm. Its function is as follows. One of several proteins that assist in the late maturation steps of the functional core of the 30S ribosomal subunit. Associates with free 30S ribosomal subunits (but not with 30S subunits that are part of 70S ribosomes or polysomes). Required for efficient processing of 16S rRNA. May interact with the 5'-terminal helix region of 16S rRNA. The polypeptide is Ribosome-binding factor A (Coxiella burnetii (strain CbuK_Q154) (Coxiella burnetii (strain Q154))).